We begin with the raw amino-acid sequence, 504 residues long: Ribose import ATP-binding protein RbsA (504 aa).

ABC transporter domains are found at residues 6–242 (LELK…VGRR) and 252–495 (VRHG…VGKT). 38-45 (GENGAGKS) is an ATP binding site.

The protein belongs to the ABC transporter superfamily. Ribose importer (TC 3.A.1.2.1) family. The complex is composed of an ATP-binding protein (RbsA), two transmembrane proteins (RbsC) and a solute-binding protein (RbsB).

It localises to the cell inner membrane. It carries out the reaction D-ribose(out) + ATP + H2O = D-ribose(in) + ADP + phosphate + H(+). Functionally, part of the ABC transporter complex RbsABC involved in ribose import. Responsible for energy coupling to the transport system. The chain is Ribose import ATP-binding protein RbsA from Photobacterium profundum (strain SS9).